Consider the following 512-residue polypeptide: MTNVVQETIGGLNSPRTCPPCILVIFGATGDLTARKLLPALYHLTKEGRLSDQFVCVGFARREKSNELFRQEMKQAVIQFSPSELDIKVWEDFQQRLFYHRSEFDNNMGYTSLKDSLEDLDKTYGTRGNRLFYLSTPPQYFSRIIENLNKHKLFYKNQDQGKPWSRVIIEKPFGRDLDSAKQLQQCINENLNENSVYHIDHYLGKETVQNILTTRFANTIFESCWNSQYIDHVQISLSETIGIGSRGNFFEKSGMLRDMVQNHMMQLLCLLTMEPPTTFDADEIRKEKIKILQRISPFSEGSSIVRGQYGPGTVQGVSVLGYREEENVDKDSRVETYVALKTVINNPRWLGVPFYLRAGKRLAKKSTDISIIFKKSPYNLFAAEECSRCPIENDLLIIRIQPDEGVALKFNCKVPGTNNIVRPVKMDFRYDSYFQTTTPEAYERLLCDCIIGDRTLFTGGDEVMASWKLFTPVLEEWDQDSSPSFPNYPAGSSGPKEADALIERDGRSWRPL.

NADP(+)-binding positions include Arg61, 103-104 (EF), and Lys171. Substrate contacts are provided by His201, Lys205, Glu239, and Asp258. Catalysis depends on His263, which acts as the Proton acceptor. Residues Lys360 and Lys365 each contribute to the substrate site. The tract at residues 479 to 512 (QDSSPSFPNYPAGSSGPKEADALIERDGRSWRPL) is disordered. Positions 496-512 (KEADALIERDGRSWRPL) are enriched in basic and acidic residues.

Belongs to the glucose-6-phosphate dehydrogenase family.

The catalysed reaction is D-glucose 6-phosphate + NADP(+) = 6-phospho-D-glucono-1,5-lactone + NADPH + H(+). It participates in carbohydrate degradation; pentose phosphate pathway; D-ribulose 5-phosphate from D-glucose 6-phosphate (oxidative stage): step 1/3. Its function is as follows. Catalyzes the oxidation of glucose 6-phosphate to 6-phosphogluconolactone. In Chlamydia pneumoniae (Chlamydophila pneumoniae), this protein is Glucose-6-phosphate 1-dehydrogenase.